We begin with the raw amino-acid sequence, 244 residues long: Lipoprotein-releasing system ATP-binding protein LolD (244 aa).

The ABC transporter domain occupies 19 to 244; the sequence is IRAEALAKTY…KLRELAPSAV (226 aa). 55 to 62 provides a ligand contact to ATP; that stretch reads GASGAGKS.

It belongs to the ABC transporter superfamily. Lipoprotein translocase (TC 3.A.1.125) family. As to quaternary structure, the complex is composed of two ATP-binding proteins (LolD) and two transmembrane proteins (LolC and LolE).

It is found in the cell inner membrane. In terms of biological role, part of the ABC transporter complex LolCDE involved in the translocation of mature outer membrane-directed lipoproteins, from the inner membrane to the periplasmic chaperone, LolA. Responsible for the formation of the LolA-lipoprotein complex in an ATP-dependent manner. The sequence is that of Lipoprotein-releasing system ATP-binding protein LolD from Xanthomonas axonopodis pv. citri (strain 306).